We begin with the raw amino-acid sequence, 388 residues long: Beta-1,4-galactosyltransferase 5 (388 aa).

Residues 1–14 (MRARRGLLRLPRRS) lie on the Cytoplasmic side of the membrane. The chain crosses the membrane as a helical; Signal-anchor for type II membrane protein span at residues 15-35 (LLAALFFFSLSSSLLYFVYVA). The Lumenal segment spans residues 36–388 (PGIVNTYLFM…TPELAQVTEY (353 aa)). N-linked (GlcNAc...) asparagine glycans are attached at residues Asn-77, Asn-81, Asn-90, and Asn-128. Cys-114 and Cys-158 are oxidised to a cystine. Residues 169–173 (PFRNR), 208–210 (FNR), 235–236 (VD), Tyr-264, and Trp-296 each bind UDP-alpha-D-galactose. Cys-229 and Cys-248 are disulfide-bonded. Asp-236 serves as a coordination point for Mn(2+). An N-acetyl-D-glucosamine-binding site is contributed by 298–301 (GEDD). Residue His-329 coordinates Mn(2+). 329–330 (HH) serves as a coordination point for UDP-alpha-D-galactose. Position 340 (Arg-340) interacts with N-acetyl-D-glucosamine. N-linked (GlcNAc...) asparagine glycosylation is found at Asn-360, Asn-364, and Asn-373.

Belongs to the glycosyltransferase 7 family. Mn(2+) serves as cofactor. As to expression, highest levels in heart, brain, liver and kidney with lower levels in spleen, lung and testis.

Its subcellular location is the golgi apparatus. The protein resides in the golgi stack membrane. It catalyses the reaction a beta-D-glucosyl-(1&lt;-&gt;1')-N-acylsphing-4-enine + UDP-alpha-D-galactose = a beta-D-Gal-(1-&gt;4)-beta-D-Glc-(1&lt;-&gt;1)-Cer(d18:1(4E)) + UDP + H(+). It functions in the pathway protein modification; protein glycosylation. It participates in sphingolipid metabolism. Functionally, catalyzes the synthesis of lactosylceramide (LacCer) via the transfer of galactose from UDP-galactose to glucosylceramide (GlcCer). LacCer is the starting point in the biosynthesis of all gangliosides (membrane-bound glycosphingolipids) which play pivotal roles in the CNS including neuronal maturation and axonal and myelin formation. Plays a role in the glycosylation of BMPR1A and regulation of its protein stability. Essential for extraembryonic development during early embryogenesis. The chain is Beta-1,4-galactosyltransferase 5 from Mus musculus (Mouse).